The primary structure comprises 96 residues: Prokineticin Bm8-d (96 aa).

A signal peptide spans 1 to 19; sequence MKCFAQIVVLLLVIAFSHG. Intrachain disulfides connect Cys26-Cys38, Cys32-Cys50, Cys37-Cys78, Cys60-Cys86, and Cys80-Cys95.

This sequence belongs to the AVIT (prokineticin) family. In terms of tissue distribution, expressed by the skin glands.

It localises to the secreted. Potent agonist for both PKR1/PROKR1 and PKR2/PROKR2, and inducer of a potent and long-lasting hyperalgesia. Also potentiates capsaicin-induced TRPV1 current, when tested on DRG neurons. At subnanomolar concentrations, this protein both induces potent chemotaxis of macrophages and stimulates LPS-induced production of the pro-inflammatory cytokines IL-1 and IL-12. In vivo, potently stimulates the contraction of the guinea-pig gastrointestinal (GI) smooth muscle (nanomolar concentration). This Bombina maxima (Giant fire-bellied toad) protein is Prokineticin Bm8-d.